Consider the following 414-residue polypeptide: Esterase FrsA (414 aa).

Belongs to the FrsA family.

It carries out the reaction a carboxylic ester + H2O = an alcohol + a carboxylate + H(+). Functionally, catalyzes the hydrolysis of esters. This Escherichia fergusonii (strain ATCC 35469 / DSM 13698 / CCUG 18766 / IAM 14443 / JCM 21226 / LMG 7866 / NBRC 102419 / NCTC 12128 / CDC 0568-73) protein is Esterase FrsA.